Consider the following 306-residue polypeptide: Glutaminase (306 aa).

Substrate is bound by residues serine 64, asparagine 115, glutamate 159, asparagine 166, tyrosine 190, tyrosine 242, and valine 260.

It belongs to the glutaminase family. Homotetramer.

The catalysed reaction is L-glutamine + H2O = L-glutamate + NH4(+). This is Glutaminase from Vibrio parahaemolyticus serotype O3:K6 (strain RIMD 2210633).